The sequence spans 73 residues: Conotoxin CnIIIF (73 aa).

The signal sequence occupies residues 1–19 (MSKLGVLLTICLLLFPLTA). Residues 20-51 (LPMDGDQSVDRPAERMQDDISSGQHPLFNQKR) constitute a propeptide that is removed on maturation. Disulfide bonds link Cys53-Cys72, Cys54-Cys70, and Cys60-Cys73.

This sequence belongs to the conotoxin M superfamily. In terms of tissue distribution, expressed by the venom duct.

It localises to the secreted. Its function is as follows. Shows a paralytic effect in fish. The protein is Conotoxin CnIIIF of Conus consors (Singed cone).